The sequence spans 400 residues: MTVQQAFEQHVMHTYARFSVVFERGEGCYLEDSEGRRYLDFVAGIATCVLGHAHPVLSAAVAEQARTLIHVSNLYYTPQQACLAEWLTAHSAADQVFFCNSGAEANEGAIKLARKYGRTVLGIAEPQIICAHQSFHGRTMATVTATGQPKYQKHFHPLVPGFVHVPYNDFEALRAQVTDATAAVLIEPIQGEGGVVPGDVEFFQKLRRFCSERRILLMLDEVQTGMGRTGRLFGYEHLGIEPDVFTLAKALGGGVPIGALCAKEAFAIFEPGDHASTFGGNPLACAAALAVCQTLEAEQLVDNARERGAQLAAGLGRLVERFKPLVRTARGRGLMQGLVLSEPRAAEIVRLAMEQGLLLVSAGPEVIRFVPPLIVSAIEVDEALAILEGVFARLPVTVTA.

Pyridoxal 5'-phosphate-binding positions include 102–103 (GA) and F135. R138 contacts N(2)-acetyl-L-ornithine. 220-223 (DEVQ) serves as a coordination point for pyridoxal 5'-phosphate. K249 is subject to N6-(pyridoxal phosphate)lysine. Residue S276 coordinates N(2)-acetyl-L-ornithine. T277 serves as a coordination point for pyridoxal 5'-phosphate.

This sequence belongs to the class-III pyridoxal-phosphate-dependent aminotransferase family. ArgD subfamily. As to quaternary structure, homodimer. Pyridoxal 5'-phosphate serves as cofactor.

Its subcellular location is the cytoplasm. The enzyme catalyses N(2)-acetyl-L-ornithine + 2-oxoglutarate = N-acetyl-L-glutamate 5-semialdehyde + L-glutamate. Its pathway is amino-acid biosynthesis; L-arginine biosynthesis; N(2)-acetyl-L-ornithine from L-glutamate: step 4/4. This is Acetylornithine aminotransferase from Gloeobacter violaceus (strain ATCC 29082 / PCC 7421).